A 584-amino-acid polypeptide reads, in one-letter code: Probable terpene synthase 9 (584 aa).

Mg(2+)-binding residues include D339, D343, and E491. The short motif at 339 to 343 (DDMYD) is the DDXXD motif element.

The protein belongs to the terpene synthase family. The cofactor is Mg(2+).

Functionally, probable sesquiterpene synthase. The polypeptide is Probable terpene synthase 9 (TPS9) (Ricinus communis (Castor bean)).